The chain runs to 488 residues: Patatin-like protein 7 (488 aa).

The tract at residues 23–49 (QRGGDGATAASKSANDYNNNDSLLTDM) is disordered. Residues 32–47 (ASKSANDYNNNDSLLT) show a composition bias toward polar residues. Positions 101–301 (LSIDGGGMRG…AMSNPTAAAI (201 aa)) constitute a PNPLA domain. A GXGXXG motif is present at residues 105 to 110 (GGGMRG). Catalysis depends on Ser-145, which acts as the Nucleophile.

This sequence belongs to the patatin family. As to expression, highly expressed in roots and at lower levels in leaves, stems, flowers and siliques.

The protein localises to the cell membrane. Functionally, possesses non-specific lipolytic acyl hydrolase (LAH) activity. Catalyzes the hydrolysis of the galactolipids monogalactosyldiacylglycerol (MGDG) and digalactosyldiacylglycerol (DGDG), and the phoshpolipids phosphatidylcholine (PC), phosphatidylethanolamine (PE), phosphatidylglycerol (PG), phosphatidic acid (PA), phosphatidylserine (PS). Favors the release of fatty acid at the sn-2 position for PC. Possesses acyl-CoA thioesterase activity. Negatively affects disease resistance to the necrotic fungal pathogen Botrytis cinerea and the avirulent bacteria Pseudomonas syringae by promoting cell death and reducing the efficiency of the hypersensitive response, respectively. However, PLP2 contributes to resistance to cucumber mosaic virus (CMV), an obligate parasite inducing hypersensitive response. May negatively regulate oxylipin production, possibly via participating in membrane repair that includes removal of oxidatively modified lipids. Enzymatic products of PLP2 may influence cellulose content and cell elongation. The protein is Patatin-like protein 7 (PLP7) of Arabidopsis thaliana (Mouse-ear cress).